A 491-amino-acid chain; its full sequence is 2-aminomuconic 6-semialdehyde dehydrogenase (491 aa).

Active-site residues include Glu-252 and Cys-286.

Belongs to the aldehyde dehydrogenase family. Homotrimer.

It carries out the reaction 2-aminomuconate 6-semialdehyde + NAD(+) + H2O = (2Z,4E)-2-aminomuconate + NADH + 2 H(+). Its activity is regulated as follows. Strongly inhibited by Ag(+) and Hg(+), and comnpletely inhibited by p-chloromercuribenzoic acid. In terms of biological role, involved in the modified meta-cleavage pathway for 2-aminophenol catabolism. The enzyme is also active toward 2-hydroxymuconic 6-semialdehyde, acetaldehyde, propionaldehyde, and butyraldehyde. The chain is 2-aminomuconic 6-semialdehyde dehydrogenase (amnC) from Pseudomonas sp.